The chain runs to 245 residues: tRNA pseudouridine synthase A 1 (245 aa).

Residue Asp53 is the Nucleophile of the active site. Tyr111 is a binding site for substrate.

The protein belongs to the tRNA pseudouridine synthase TruA family. As to quaternary structure, homodimer.

It carries out the reaction uridine(38/39/40) in tRNA = pseudouridine(38/39/40) in tRNA. In terms of biological role, formation of pseudouridine at positions 38, 39 and 40 in the anticodon stem and loop of transfer RNAs. The sequence is that of tRNA pseudouridine synthase A 1 from Clostridium tetani (strain Massachusetts / E88).